The chain runs to 99 residues: Aspartyl/glutamyl-tRNA(Asn/Gln) amidotransferase subunit C (99 aa).

It belongs to the GatC family. In terms of assembly, heterotrimer of A, B and C subunits.

It carries out the reaction L-glutamyl-tRNA(Gln) + L-glutamine + ATP + H2O = L-glutaminyl-tRNA(Gln) + L-glutamate + ADP + phosphate + H(+). The enzyme catalyses L-aspartyl-tRNA(Asn) + L-glutamine + ATP + H2O = L-asparaginyl-tRNA(Asn) + L-glutamate + ADP + phosphate + 2 H(+). Functionally, allows the formation of correctly charged Asn-tRNA(Asn) or Gln-tRNA(Gln) through the transamidation of misacylated Asp-tRNA(Asn) or Glu-tRNA(Gln) in organisms which lack either or both of asparaginyl-tRNA or glutaminyl-tRNA synthetases. The reaction takes place in the presence of glutamine and ATP through an activated phospho-Asp-tRNA(Asn) or phospho-Glu-tRNA(Gln). The protein is Aspartyl/glutamyl-tRNA(Asn/Gln) amidotransferase subunit C of Thermobifida fusca (strain YX).